Consider the following 208-residue polypeptide: Small ribosomal subunit protein uS4 (208 aa).

The 61-residue stretch at 98-158 (RRLDNVVYRL…EKSRGQLRIK (61 aa)) folds into the S4 RNA-binding domain.

This sequence belongs to the universal ribosomal protein uS4 family. Part of the 30S ribosomal subunit. Contacts protein S5. The interaction surface between S4 and S5 is involved in control of translational fidelity.

In terms of biological role, one of the primary rRNA binding proteins, it binds directly to 16S rRNA where it nucleates assembly of the body of the 30S subunit. Functionally, with S5 and S12 plays an important role in translational accuracy. The chain is Small ribosomal subunit protein uS4 from Magnetococcus marinus (strain ATCC BAA-1437 / JCM 17883 / MC-1).